The following is a 79-amino-acid chain: Short neurotoxin 2 (79 aa).

Positions M1–T21 are cleaved as a signal peptide. 4 disulfides stabilise this stretch: C24-C41, C34-C59, C63-C71, and C72-C77.

Belongs to the three-finger toxin family. Short-chain subfamily. Type III alpha-neurotoxin sub-subfamily. As to expression, expressed by the venom gland.

The protein resides in the secreted. Binds with high affinity to muscle nicotinic acetylcholine receptor (nAChR) and hinders acetylcholine binding to the receptor, thereby impairing neuromuscular transmission. Competes with the binding of alpha-bungarotoxin on muscle AChR (from Torpedo) with an IC(50) of 0.30 uM. Causes muscle paralysis, spasms and increased respiration. The sequence is that of Short neurotoxin 2 from Pseudonaja textilis (Eastern brown snake).